The chain runs to 101 residues: NADH-quinone oxidoreductase subunit K (101 aa).

The next 3 membrane-spanning stretches (helical) occupy residues 4–24, 30–50, and 61–81; these read LAHF…GIFL, IVLL…FVAF, and VFVF…LAIL.

The protein belongs to the complex I subunit 4L family. In terms of assembly, NDH-1 is composed of 14 different subunits. Subunits NuoA, H, J, K, L, M, N constitute the membrane sector of the complex.

Its subcellular location is the cell inner membrane. The catalysed reaction is a quinone + NADH + 5 H(+)(in) = a quinol + NAD(+) + 4 H(+)(out). Its function is as follows. NDH-1 shuttles electrons from NADH, via FMN and iron-sulfur (Fe-S) centers, to quinones in the respiratory chain. The immediate electron acceptor for the enzyme in this species is believed to be ubiquinone. Couples the redox reaction to proton translocation (for every two electrons transferred, four hydrogen ions are translocated across the cytoplasmic membrane), and thus conserves the redox energy in a proton gradient. This is NADH-quinone oxidoreductase subunit K from Cupriavidus taiwanensis (strain DSM 17343 / BCRC 17206 / CCUG 44338 / CIP 107171 / LMG 19424 / R1) (Ralstonia taiwanensis (strain LMG 19424)).